The primary structure comprises 176 residues: Oleosin Ara h 14.0102 (176 aa).

Residue Ala2 is modified to N-acetylalanine; alternate. 2 helical membrane-spanning segments follow: residues 61 to 81 and 87 to 107; these read GTLL…LAIA and FFSP…IGIL. The interval 156–176 is disordered; that stretch reads KTKDAGQEIQTKAQDVKRSSS.

The protein belongs to the oleosin family. In terms of assembly, homodimer. Forms oligomers. Expressed in seeds (at protein level). Not expressed in leaves.

Its subcellular location is the lipid droplet. The protein resides in the membrane. May have a structural role to stabilize the lipid body during desiccation of the seed by preventing coalescence of the oil. Probably interacts with both lipid and phospholipid moieties of lipid bodies. May also provide recognition signals for specific lipase anchorage in lipolysis during seedling growth. The chain is Oleosin Ara h 14.0102 from Arachis hypogaea (Peanut).